Reading from the N-terminus, the 221-residue chain is Ribosomal RNA small subunit methyltransferase Nep1 (221 aa).

Residues G174, G179, and V196 to L201 contribute to the S-adenosyl-L-methionine site.

The protein belongs to the class IV-like SAM-binding methyltransferase superfamily. RNA methyltransferase NEP1 family. In terms of assembly, homodimer.

The enzyme catalyses a pseudouridine in rRNA + S-adenosyl-L-methionine = an N(1)-methylpseudouridine in rRNA + S-adenosyl-L-homocysteine + H(+). Functionally, methyltransferase involved in ribosomal biogenesis. Specifically catalyzes the N1-methylation of the pseudouridine corresponding to position 914 in M.jannaschii 16S rRNA. In Pyrobaculum neutrophilum (strain DSM 2338 / JCM 9278 / NBRC 100436 / V24Sta) (Thermoproteus neutrophilus), this protein is Ribosomal RNA small subunit methyltransferase Nep1.